Reading from the N-terminus, the 489-residue chain is Lysine--tRNA ligase (489 aa).

Mg(2+) is bound by residues Glu399 and Glu406.

This sequence belongs to the class-II aminoacyl-tRNA synthetase family. In terms of assembly, homodimer. Requires Mg(2+) as cofactor.

The protein resides in the cytoplasm. It catalyses the reaction tRNA(Lys) + L-lysine + ATP = L-lysyl-tRNA(Lys) + AMP + diphosphate. In Roseiflexus sp. (strain RS-1), this protein is Lysine--tRNA ligase.